A 398-amino-acid chain; its full sequence is UDP-N-acetylglucosamine--N-acetylmuramyl-(pentapeptide) pyrophosphoryl-undecaprenol N-acetylglucosamine transferase (398 aa).

UDP-N-acetyl-alpha-D-glucosamine is bound by residues 15-17 (TGG), asparagine 125, arginine 168, serine 196, and glutamine 297.

The protein belongs to the glycosyltransferase 28 family. MurG subfamily.

It is found in the cell inner membrane. It catalyses the reaction di-trans,octa-cis-undecaprenyl diphospho-N-acetyl-alpha-D-muramoyl-L-alanyl-D-glutamyl-meso-2,6-diaminopimeloyl-D-alanyl-D-alanine + UDP-N-acetyl-alpha-D-glucosamine = di-trans,octa-cis-undecaprenyl diphospho-[N-acetyl-alpha-D-glucosaminyl-(1-&gt;4)]-N-acetyl-alpha-D-muramoyl-L-alanyl-D-glutamyl-meso-2,6-diaminopimeloyl-D-alanyl-D-alanine + UDP + H(+). It functions in the pathway cell wall biogenesis; peptidoglycan biosynthesis. In terms of biological role, cell wall formation. Catalyzes the transfer of a GlcNAc subunit on undecaprenyl-pyrophosphoryl-MurNAc-pentapeptide (lipid intermediate I) to form undecaprenyl-pyrophosphoryl-MurNAc-(pentapeptide)GlcNAc (lipid intermediate II). In Erythrobacter litoralis (strain HTCC2594), this protein is UDP-N-acetylglucosamine--N-acetylmuramyl-(pentapeptide) pyrophosphoryl-undecaprenol N-acetylglucosamine transferase.